A 402-amino-acid chain; its full sequence is Propionate kinase (402 aa).

Residues N11 and K18 each contribute to the ATP site. N11 contacts Mg(2+). R86 is a substrate binding site. Catalysis depends on D143, which acts as the Proton donor/acceptor. ATP is bound by residues H175, 203 to 207, 278 to 280, and 326 to 330; these read HLGNG, DLR, and GIGEN.

Belongs to the acetokinase family. TdcD subfamily. In terms of assembly, homodimer. Mg(2+) is required as a cofactor.

It catalyses the reaction propanoate + ATP = propanoyl phosphate + ADP. It functions in the pathway amino-acid degradation; L-threonine degradation via propanoate pathway; propanoate from L-threonine: step 4/4. Catalyzes the conversion of propionyl phosphate and ADP to propionate and ATP. This Escherichia coli O6:H1 (strain CFT073 / ATCC 700928 / UPEC) protein is Propionate kinase.